The following is a 57-amino-acid chain: MKMSIVIILLLFTCLIATNGASGTKCSGSPECVKFCRTKGCRNGKCMNRSCKCYLCS.

A signal peptide spans Met-1–Gly-23. Disulfide bonds link Cys-26–Cys-46, Cys-32–Cys-51, Cys-36–Cys-53, and Cys-41–Cys-56.

It belongs to the short scorpion toxin superfamily. Potassium channel inhibitor family. Alpha-KTx 23 subfamily. Expressed by the venom gland.

It is found in the secreted. In terms of biological role, this toxin shows both immunosuppressive and anti-inflammatory activities. It has the potential to inhibit human T cell activation, since it reduces IL-2 secretion and the expression of T cell activation marker CD69 and acts as an anti-inflammatory agent, since it provokes the reduction of secretion of both IFN-gamma and TNF-alpha. In vivo, the delayed-type hypersensitivity response in rat autoimmune disease model is ameliorated in the presence of this toxin. Acts by blocking Kv1.3/KCNA3 potassium channels of T-lymphocytes. This Scorpiops tibetanus (Scorpion) protein is Potassium channel toxin alpha-KTx 23.3.